Here is a 760-residue protein sequence, read N- to C-terminus: DNA-directed RNA polymerase subunit beta' (760 aa).

Zn(2+) is bound by residues cysteine 76, cysteine 78, cysteine 90, and cysteine 93. Residues aspartate 594, aspartate 596, and aspartate 598 each contribute to the Mg(2+) site.

It belongs to the RNA polymerase beta' chain family. RpoC1 subfamily. In plastids the minimal PEP RNA polymerase catalytic core is composed of four subunits: alpha, beta, beta', and beta''. When a (nuclear-encoded) sigma factor is associated with the core the holoenzyme is formed, which can initiate transcription. Requires Mg(2+) as cofactor. Zn(2+) is required as a cofactor.

The protein localises to the plastid. It is found in the chloroplast. The catalysed reaction is RNA(n) + a ribonucleoside 5'-triphosphate = RNA(n+1) + diphosphate. Functionally, DNA-dependent RNA polymerase catalyzes the transcription of DNA into RNA using the four ribonucleoside triphosphates as substrates. The protein is DNA-directed RNA polymerase subunit beta' of Bigelowiella natans (Pedinomonas minutissima).